The chain runs to 39 residues: Pro-opiomelanocortin (39 aa).

Met-13 is subject to Methionine amide.

This sequence belongs to the POMC family.

The protein localises to the secreted. Precursor protein for pituitary hormones that regulate stress and environmental adaptation. Its function is as follows. Stimulates the adrenal glands to release cortisol. In terms of biological role, anorexigenic peptide. Increases the pigmentation of skin by increasing melanin production in melanocytes. The sequence is that of Pro-opiomelanocortin (pomc) from Squalus acanthias (Spiny dogfish).